A 552-amino-acid chain; its full sequence is MLQDKGLSESEEAFRAPGPALGEASNTSTTNAPEPALATPGLSGAALSSPPGQGADVAAAAAAAAEQTIENIKVGLHEKELWKKFHEAGTEMIITKAGRRMFPSYKVKVTGMNPKTKYILLIDIVPADDHRYKFCDNKWMVAGKAEPAMPGRLYVHPDSPATGAHWMRQLVSFQKLKLTNNHLDPFGHIILNSMHKYQPRLHIVKADENNAFGSKNTAFCTHVFPETSFISVTSYQNHKITQLKIENNPFAKGFRGSDDSDLRVARLQSKEYPVISKSIMRQRLVSSQLSAKPDVSPLHSAHQALQHYQYENGAHMQFAAAEPQDLPLNTFPTQRDSSLFYHCLKRRDSARHLDLPCKRSYLETPSSVGDDHYFRSPPPYDQQMLSPSYCSEVTPREACMYSSSGPEIAGVSAVDDLPPPPLSCNMWTSVSPYTSYSVQTMETVPYQPFPAHFTATTVMPRLPTIAAQSAQPPGNAHFSVYNQLSQSQVRERGPSASFPRERGLPGMCERKPPSPHLNTANEFLYSQSFSLTRESSLQYHSGMGTVENWTDG.

The segment covering 1-14 has biased composition (basic and acidic residues); that stretch reads MLQDKGLSESEEAF. The disordered stretch occupies residues 1–50; that stretch reads MLQDKGLSESEEAFRAPGPALGEASNTSTTNAPEPALATPGLSGAALSSP. The T-box DNA-binding region spans 76 to 256; sequence LHEKELWKKF…NNPFAKGFRG (181 aa). Position 514 is a phosphoserine (Ser514).

It localises to the nucleus. Its function is as follows. Transcriptional regulator that has an essential role in the organogenesis of lungs, pelvis, and hindlimbs. The polypeptide is T-box transcription factor TBX4 (Tbx4) (Mus musculus (Mouse)).